A 468-amino-acid chain; its full sequence is V-type proton ATPase subunit S1 (468 aa).

The first 35 residues, 1 to 35, serve as a signal peptide directing secretion; that stretch reads MMAATAAAQVRAGTRWAPALCRMPWLPLMLVAAAA. Residues 36-228 constitute a propeptide that is removed on maturation; sequence ATSEQQVPLV…TAVRPSRVAR (193 aa). Residues 36 to 417 are Lumenal-facing; the sequence is ATSEQQVPLV…KKFSYASDCA (382 aa). N-linked (GlcNAc...) asparagine glycans are attached at residues Asn-167, Asn-258, Asn-271, Asn-294, Asn-301, Asn-348, Asn-355, and Asn-404. Residues Cys-369 and Cys-416 are joined by a disulfide bond. The chain crosses the membrane as a helical span at residues 418–438; the sequence is GFFSPGIWMGLLTSLFMLFIF. At 439-468 the chain is on the cytoplasmic side; that stretch reads TYGLHMILSLKTMDRFDDHKGPTITLTQIV.

It belongs to the vacuolar ATPase subunit S1 family. As to quaternary structure, accessory component of the multisubunit proton-transporting vacuolar (V)-ATPase protein pump. Interacts (via N-terminus) with ATP6AP2 (via N-terminus). Interacts with RNASEK. Interacts with TMEM106B (via C-terminus). In terms of processing, N-glycosylated.

Its subcellular location is the endoplasmic reticulum membrane. It is found in the endoplasmic reticulum-Golgi intermediate compartment membrane. The protein resides in the cytoplasmic vesicle. It localises to the secretory vesicle. The protein localises to the synaptic vesicle membrane. Its subcellular location is the clathrin-coated vesicle membrane. Accessory subunit of the proton-transporting vacuolar (V)-ATPase protein pump, which is required for luminal acidification of secretory vesicles. Guides the V-type ATPase into specialized subcellular compartments, such as neuroendocrine regulated secretory vesicles or the ruffled border of the osteoclast, thereby regulating its activity. Involved in membrane trafficking and Ca(2+)-dependent membrane fusion. May play a role in the assembly of the V-type ATPase complex. In aerobic conditions, involved in intracellular iron homeostasis, thus triggering the activity of Fe(2+) prolyl hydroxylase (PHD) enzymes, and leading to HIF1A hydroxylation and subsequent proteasomal degradation. In islets of Langerhans cells, may regulate the acidification of dense-core secretory granules. This chain is V-type proton ATPase subunit S1 (ATP6AP1), found in Bos taurus (Bovine).